A 198-amino-acid polypeptide reads, in one-letter code: Superoxide dismutase [Mn], mitochondrial (198 aa).

Mn(2+) is bound at residue His26. Position 34 is a 3'-nitrotyrosine (Tyr34). N6-acetyllysine; alternate occurs at positions 44 and 51. 2 positions are modified to N6-succinyllysine; alternate: Lys44 and Lys51. His74 is a binding site for Mn(2+). Lys90 carries the post-translational modification N6-acetyllysine. 2 positions are modified to N6-acetyllysine; alternate: Lys98 and Lys106. N6-succinyllysine; alternate occurs at positions 98 and 106. Mn(2+)-binding residues include Asp159 and His163. Residue Lys178 is modified to N6-acetyllysine.

It belongs to the iron/manganese superoxide dismutase family. Homotetramer. The cofactor is Mn(2+). Nitrated under oxidative stress. Nitration coupled with oxidation inhibits the catalytic activity. In terms of processing, acetylation at Lys-98 decreases enzymatic activity. Deacetylated by SIRT3 upon exposure to ionizing radiations or after long fasting. Post-translationally, polyubiquitinated; leading to proteasomal degradation. Deubiquitinated by USP36 which increases protein stability.

Its subcellular location is the mitochondrion matrix. The enzyme catalyses 2 superoxide + 2 H(+) = H2O2 + O2. Destroys superoxide anion radicals which are normally produced within the cells and which are toxic to biological systems. The sequence is that of Superoxide dismutase [Mn], mitochondrial (SOD2) from Hylobates lar (Lar gibbon).